The sequence spans 128 residues: Large ribosomal subunit protein bL17 (128 aa).

It belongs to the bacterial ribosomal protein bL17 family. Part of the 50S ribosomal subunit. Contacts protein L32.

This Streptococcus thermophilus (strain ATCC BAA-250 / LMG 18311) protein is Large ribosomal subunit protein bL17.